A 164-amino-acid polypeptide reads, in one-letter code: NADH-quinone oxidoreductase subunit I (164 aa).

4Fe-4S ferredoxin-type domains are found at residues 55-85 (LRRY…IDAE) and 95-124 (TRYD…EGPN). 8 residues coordinate [4Fe-4S] cluster: cysteine 65, cysteine 68, cysteine 71, cysteine 75, cysteine 104, cysteine 107, cysteine 110, and cysteine 114.

The protein belongs to the complex I 23 kDa subunit family. In terms of assembly, NDH-1 is composed of 14 different subunits. Subunits NuoA, H, J, K, L, M, N constitute the membrane sector of the complex. Requires [4Fe-4S] cluster as cofactor.

It is found in the cell inner membrane. The enzyme catalyses a quinone + NADH + 5 H(+)(in) = a quinol + NAD(+) + 4 H(+)(out). Functionally, NDH-1 shuttles electrons from NADH, via FMN and iron-sulfur (Fe-S) centers, to quinones in the respiratory chain. The immediate electron acceptor for the enzyme in this species is believed to be ubiquinone. Couples the redox reaction to proton translocation (for every two electrons transferred, four hydrogen ions are translocated across the cytoplasmic membrane), and thus conserves the redox energy in a proton gradient. In Ruegeria sp. (strain TM1040) (Silicibacter sp.), this protein is NADH-quinone oxidoreductase subunit I.